Here is an 859-residue protein sequence, read N- to C-terminus: Outer membrane usher protein AfaC (859 aa).

The N-terminal stretch at 1–28 (MRDTSSGRMRTGVTGLALAVMVACVMFR) is a signal peptide.

The protein belongs to the fimbrial export usher family.

The protein resides in the cell outer membrane. In terms of biological role, involved in the export and assembly of AFA-III afimbrial adhesin subunits across the outer membrane. This Escherichia coli protein is Outer membrane usher protein AfaC (afaC).